A 130-amino-acid polypeptide reads, in one-letter code: Endoglucanase 2 (130 aa).

Residues His-47, Asp-98, and Glu-107 contribute to the active site.

Belongs to the glycosyl hydrolase 9 (cellulase E) family.

The catalysed reaction is Endohydrolysis of (1-&gt;4)-beta-D-glucosidic linkages in cellulose, lichenin and cereal beta-D-glucans.. Functionally, involved in ripening fruit process. The sequence is that of Endoglucanase 2 (CEL2) from Persea americana (Avocado).